The following is a 161-amino-acid chain: Allophycocyanin alpha chain (161 aa).

Asn71 bears the N4-methylasparagine mark. Cys81 serves as a coordination point for (2R,3E)-phycocyanobilin.

This sequence belongs to the phycobiliprotein family. As to quaternary structure, heterodimer of an alpha and a beta chain. Contains one covalently linked phycocyanobilin chromophore.

The protein resides in the plastid. It is found in the chloroplast thylakoid membrane. Light-harvesting photosynthetic bile pigment-protein from the phycobiliprotein complex. Allophycocyanin has a maximum absorption at approximately 650 nanometers. In Cyanidium caldarium (Red alga), this protein is Allophycocyanin alpha chain (apcA).